The primary structure comprises 337 residues: MRVLGIETSCDETGIAIYDEEKGLMAHTLYSQVKLHADYGGVVPELASRDHVRKIIPLIREALKNADTRIEDLDGICYTKGPGLIGALLVGACVGRSLAFSWNLPAVGVHHMEGHLLAPMLEDEVPEFPFVALLVSGGHSMLVKVDGIGQYEVLGESIDDAAGEAFDKTAKLMGLDYPGGPRLAKLAASGQPANYKFPRPMTDRPGLDFSFSGLKTFVANTIAAEPDDEQTRANIARAFEEAVVDTLSIKCRRALEQTGYKRLVIAGGVSANVRLRAGLAELMEKLGGKVYYPRGEFCTDNGAMIAYAGLQRLKAGQLEDLAVKGQPRWPLDTLLPV.

2 residues coordinate Fe cation: H111 and H115. Residues 134 to 138, D167, G180, and N272 contribute to the substrate site; that span reads LVSGG. Residue D300 coordinates Fe cation.

It belongs to the KAE1 / TsaD family. Fe(2+) is required as a cofactor.

It is found in the cytoplasm. It catalyses the reaction L-threonylcarbamoyladenylate + adenosine(37) in tRNA = N(6)-L-threonylcarbamoyladenosine(37) in tRNA + AMP + H(+). Functionally, required for the formation of a threonylcarbamoyl group on adenosine at position 37 (t(6)A37) in tRNAs that read codons beginning with adenine. Is involved in the transfer of the threonylcarbamoyl moiety of threonylcarbamoyl-AMP (TC-AMP) to the N6 group of A37, together with TsaE and TsaB. TsaD likely plays a direct catalytic role in this reaction. This chain is tRNA N6-adenosine threonylcarbamoyltransferase, found in Shewanella amazonensis (strain ATCC BAA-1098 / SB2B).